The sequence spans 369 residues: Transmembrane protein 144 homolog A (369 aa).

The next 10 helical transmembrane spans lie at 6–26 (VIGY…YVPV), 35–55 (LSYA…AMMI), 63–83 (PIGI…IPII), 85–105 (LVGL…VGFF), 122–142 (DWMN…FFFI), 221–241 (VAGI…MIPM), 256–276 (IIFS…MFYA), 288–308 (TVFP…GLMI), 318–338 (GYPI…VFYF), and 347–367 (LLIL…LAFS).

This sequence belongs to the TMEM144 family.

Its subcellular location is the membrane. The sequence is that of Transmembrane protein 144 homolog A (tmem144A) from Dictyostelium discoideum (Social amoeba).